Here is a 433-residue protein sequence, read N- to C-terminus: uncharacterized protein (433 aa).

A methylglyoxal synthase region spans residues 1–126 (MAAHIALIAH…VIKLLGKTKT (126 aa)). One can recognise an MGS-like domain in the interval 1-145 (MAAHIALIAH…GQGNVERELD (145 aa)). The active site involves D62. A DAGKc domain is found at 127–262 (GHLIFNPVAG…VDTALCNDIP (136 aa)).

This sequence in the N-terminal section; belongs to the methylglyoxal synthase family.

This is an uncharacterized protein from Synechocystis sp. (strain ATCC 27184 / PCC 6803 / Kazusa).